Consider the following 83-residue polypeptide: MRLILSLPVLAVVLAMVLEGPAPAQAAPDISSAWESIPEKLEEFGRTVKEKVRTAIDHIKKSDFPEKTRKWFSEMFDTLKEKF.

Residues 1 to 26 form the signal peptide; it reads MRLILSLPVLAVVLAMVLEGPAPAQA.

Belongs to the apolipoprotein C1 family.

It is found in the secreted. Functionally, inhibitor of lipoprotein binding to the low density lipoprotein (LDL) receptor, LDL receptor-related protein, and very low density lipoprotein (VLDL) receptor. Associates with high density lipoproteins (HDL) and the triacylglycerol-rich lipoproteins in the plasma and makes up about 10% of the protein of the VLDL and 2% of that of HDL. Appears to interfere directly with fatty acid uptake and is also the major plasma inhibitor of cholesteryl ester transfer protein (CETP). Binds free fatty acids and reduces their intracellular esterification. Modulates the interaction of APOE with beta-migrating VLDL and inhibits binding of beta-VLDL to the LDL receptor-related protein. The chain is Apolipoprotein C-I (APOC1) from Eonycteris spelaea (Lesser dawn bat).